A 175-amino-acid chain; its full sequence is Epididymal-specific lipocalin-8 (175 aa).

Positions 1–25 are cleaved as a signal peptide; it reads MPGAAEALPTVTVTLVAGAVPPASG. N-linked (GlcNAc...) asparagine glycosylation is found at Asn-66 and Asn-74. A disulfide bridge links Cys-79 with Cys-166.

The protein belongs to the calycin superfamily. Lipocalin family.

The protein localises to the secreted. May play a role in male fertility. May act as a retinoid carrier protein within the epididymis. This chain is Epididymal-specific lipocalin-8 (LCN8), found in Homo sapiens (Human).